A 224-amino-acid chain; its full sequence is Ribosomal RNA small subunit methyltransferase G (224 aa).

S-adenosyl-L-methionine is bound by residues Gly-89, Phe-94, 140–141 (AE), and Arg-153.

It belongs to the methyltransferase superfamily. RNA methyltransferase RsmG family.

The protein localises to the cytoplasm. Its function is as follows. Specifically methylates the N7 position of a guanine in 16S rRNA. The protein is Ribosomal RNA small subunit methyltransferase G of Bacteroides fragilis (strain YCH46).